A 235-amino-acid chain; its full sequence is MTSRSRQAAYSGIFINETTGEFPQKEQELFEGIVAVIAVVILTWMVFWMRKVSRNVKVQLEQAVDSALQRGNHHGWALVMMVFFAVAREGLESVFFLLAAFQQDVGIWPPLGAMLGLATAVVLGFLLYWGGIRLNLGAFFKWTSLFILFVAAGLAAGAIRAFHEAGLWNHFQEIAFDMSAVLSTHSLFGTLMEGIFGYQEAPSVSEVAVWFIYLIPALVAFALPPRAGATASRSA.

Over 1-28 (MTSRSRQAAYSGIFINETTGEFPQKEQE) the chain is Periplasmic. A helical transmembrane segment spans residues 29-49 (LFEGIVAVIAVVILTWMVFWM). The Cytoplasmic segment spans residues 50–77 (RKVSRNVKVQLEQAVDSALQRGNHHGWA). A helical membrane pass occupies residues 78 to 98 (LVMMVFFAVAREGLESVFFLL). At 99–106 (AAFQQDVG) the chain is on the periplasmic side. A helical membrane pass occupies residues 107-127 (IWPPLGAMLGLATAVVLGFLL). The Cytoplasmic portion of the chain corresponds to 128-138 (YWGGIRLNLGA). A helical membrane pass occupies residues 139–159 (FFKWTSLFILFVAAGLAAGAI). Over 160–177 (RAFHEAGLWNHFQEIAFD) the chain is Periplasmic. A helical membrane pass occupies residues 178-198 (MSAVLSTHSLFGTLMEGIFGY). At 199-203 (QEAPS) the chain is on the cytoplasmic side. The helical transmembrane segment at 204 to 224 (VSEVAVWFIYLIPALVAFALP) threads the bilayer. At 225–235 (PRAGATASRSA) the chain is on the periplasmic side.

The protein belongs to the oxidase-dependent Fe transporter (OFeT) (TC 9.A.10.1) family. Part of a ferrous iron transporter composed of EfeU, EfeO and EfeB.

The protein localises to the cell inner membrane. In terms of biological role, uptake of Fe(2+) ions across the membrane. This Shigella flexneri protein is Ferrous iron permease EfeU (efeU).